The chain runs to 344 residues: Anthranilate phosphoribosyltransferase (344 aa).

5-phospho-alpha-D-ribose 1-diphosphate is bound by residues G80, 83 to 84 (GD), T88, 90 to 93 (NVST), 108 to 116 (KHGNRSVSS), and S120. G80 contributes to the anthranilate binding site. S92 contacts Mg(2+). Residue N111 coordinates anthranilate. R166 serves as a coordination point for anthranilate. Mg(2+) is bound by residues D225 and E226.

This sequence belongs to the anthranilate phosphoribosyltransferase family. As to quaternary structure, homodimer. It depends on Mg(2+) as a cofactor.

The enzyme catalyses N-(5-phospho-beta-D-ribosyl)anthranilate + diphosphate = 5-phospho-alpha-D-ribose 1-diphosphate + anthranilate. The protein operates within amino-acid biosynthesis; L-tryptophan biosynthesis; L-tryptophan from chorismate: step 2/5. Functionally, catalyzes the transfer of the phosphoribosyl group of 5-phosphorylribose-1-pyrophosphate (PRPP) to anthranilate to yield N-(5'-phosphoribosyl)-anthranilate (PRA). The sequence is that of Anthranilate phosphoribosyltransferase from Legionella pneumophila (strain Lens).